The primary structure comprises 554 residues: Trimethyltridecatetraene synthase (554 aa).

Residues 1–21 (MSAAVALAVILAVYVVLRYIS) traverse the membrane as a helical segment. C464 contacts heme.

This sequence belongs to the cytochrome P450 family. Requires heme as cofactor.

Its subcellular location is the membrane. The enzyme catalyses (6E,10E)-geranyllinalool + reduced [NADPH--hemoprotein reductase] + O2 = (3E,7E)-4,8,12-trimethyltrideca 1,3,7,11-tetraene + but-3-en-2-one + oxidized [NADPH--hemoprotein reductase] + 2 H2O + H(+). It participates in secondary metabolite biosynthesis; terpenoid biosynthesis. In terms of biological role, component of the volatile terpenes biosynthesis pathways. Converts mainly geranyllinalool to trimethyltridecatetraene (TMTT). In Zea mays (Maize), this protein is Trimethyltridecatetraene synthase.